The chain runs to 492 residues: Catalase isozyme 2 (492 aa).

Active-site residues include His-65 and Asn-138. Residue Tyr-347 participates in heme binding.

Belongs to the catalase family. In terms of assembly, homotetramer. It depends on heme as a cofactor. High levels in green cotyledons, mature leaf, stem and green hypocotyl.

The protein resides in the peroxisome. It carries out the reaction 2 H2O2 = O2 + 2 H2O. Occurs in almost all aerobically respiring organisms and serves to protect cells from the toxic effects of hydrogen peroxide. The sequence is that of Catalase isozyme 2 (CAT2) from Cucurbita pepo (Vegetable marrow).